The sequence spans 574 residues: Probable cytochrome c oxidase subunit 1 (574 aa).

The helical transmembrane segment at 40-60 (IGIMYCVACFIFFFVGGLLAL) threads the bilayer. Residue H86 participates in Fe(II)-heme a binding. Transmembrane regions (helical) follow at residues 89–109 (IMLL…VLPL), 121–141 (LNAF…AGFI), 170–190 (LWIM…VNMI), 213–233 (ILVT…ALFG), 258–278 (LFWF…FGIV), and 290–310 (IFGY…SVAV). Cu cation-binding residues include H264 and Y268. Residues 264 to 268 (HPEVY) constitute a cross-link (1'-histidyl-3'-tyrosine (His-Tyr)). Positions 313 and 314 each coordinate Cu cation. Transmembrane regions (helical) follow at residues 315-335 (MFAT…LIAV) and 359-379 (MLFS…GVLL). H397 serves as a coordination point for heme a3. The next 3 helical transmembrane spans lie at 398-418 (FHYV…YFWF), 433-453 (LHFW…HWLG), and 476-496 (VSTI…WNVF). H399 contacts Fe(II)-heme a.

The protein belongs to the heme-copper respiratory oxidase family. In terms of assembly, associates with subunits II, III and IV to form cytochrome c oxidase. Requires Cu(2+) as cofactor. Heme serves as cofactor.

It is found in the cell membrane. It catalyses the reaction 4 Fe(II)-[cytochrome c] + O2 + 8 H(+)(in) = 4 Fe(III)-[cytochrome c] + 2 H2O + 4 H(+)(out). It functions in the pathway energy metabolism; oxidative phosphorylation. Its function is as follows. Cytochrome c oxidase is the component of the respiratory chain that catalyzes the reduction of oxygen to water. Subunits 1-3 form the functional core of the enzyme complex. CO I is the catalytic subunit of the enzyme. Electrons originating in cytochrome c are transferred via the copper A center of subunit 2 and heme A of subunit 1 to the bimetallic center formed by heme A3 and copper B. The protein is Probable cytochrome c oxidase subunit 1 (ctaD) of Mycobacterium leprae (strain TN).